Reading from the N-terminus, the 429-residue chain is Adenylosuccinate synthetase (429 aa).

GTP is bound by residues Gly-12–Lys-18 and Gly-40–Thr-42. The active-site Proton acceptor is Asp-13. Mg(2+) contacts are provided by Asp-13 and Gly-40. Residues Asp-13–Lys-16, Asn-38–His-41, Thr-129, Arg-143, Gln-223, Thr-238, and Arg-302 each bind IMP. His-41 functions as the Proton donor in the catalytic mechanism. Val-298–Arg-304 lines the substrate pocket. GTP-binding positions include Arg-304, Lys-330–Asp-332, and Ser-412–Ser-414.

The protein belongs to the adenylosuccinate synthetase family. As to quaternary structure, homodimer. Mg(2+) serves as cofactor.

It is found in the cytoplasm. It catalyses the reaction IMP + L-aspartate + GTP = N(6)-(1,2-dicarboxyethyl)-AMP + GDP + phosphate + 2 H(+). It participates in purine metabolism; AMP biosynthesis via de novo pathway; AMP from IMP: step 1/2. Functionally, plays an important role in the de novo pathway of purine nucleotide biosynthesis. Catalyzes the first committed step in the biosynthesis of AMP from IMP. The sequence is that of Adenylosuccinate synthetase from Brucella suis (strain ATCC 23445 / NCTC 10510).